A 130-amino-acid chain; its full sequence is Small ribosomal subunit protein uS9 (130 aa).

It belongs to the universal ribosomal protein uS9 family.

The polypeptide is Small ribosomal subunit protein uS9 (Histophilus somni (strain 129Pt) (Haemophilus somnus)).